Reading from the N-terminus, the 185-residue chain is UPF0397 protein LJ_1703 (185 aa).

5 helical membrane passes run 6–26, 46–66, 78–98, 113–133, and 147–167; these read GLSV…VILA, FLAL…GFIG, TWWS…LYGM, IGFN…IAPV, and FLQG…LGTI.

Belongs to the UPF0397 family.

The protein resides in the cell membrane. The sequence is that of UPF0397 protein LJ_1703 from Lactobacillus johnsonii (strain CNCM I-12250 / La1 / NCC 533).